The primary structure comprises 206 residues: Pyridoxine/pyridoxamine 5'-phosphate oxidase (206 aa).

Residues 53-58 (RMVLLK), 68-69 (YT), K75, and Q97 contribute to the FMN site. K58 lines the substrate pocket. Substrate contacts are provided by Y115, R119, and S123. FMN-binding positions include 132 to 133 (QS) and W177. Residue 183 to 185 (RLH) coordinates substrate. R187 contributes to the FMN binding site.

This sequence belongs to the pyridoxamine 5'-phosphate oxidase family. In terms of assembly, homodimer. Requires FMN as cofactor.

It catalyses the reaction pyridoxamine 5'-phosphate + O2 + H2O = pyridoxal 5'-phosphate + H2O2 + NH4(+). The enzyme catalyses pyridoxine 5'-phosphate + O2 = pyridoxal 5'-phosphate + H2O2. It functions in the pathway cofactor metabolism; pyridoxal 5'-phosphate salvage; pyridoxal 5'-phosphate from pyridoxamine 5'-phosphate: step 1/1. It participates in cofactor metabolism; pyridoxal 5'-phosphate salvage; pyridoxal 5'-phosphate from pyridoxine 5'-phosphate: step 1/1. Catalyzes the oxidation of either pyridoxine 5'-phosphate (PNP) or pyridoxamine 5'-phosphate (PMP) into pyridoxal 5'-phosphate (PLP). The chain is Pyridoxine/pyridoxamine 5'-phosphate oxidase from Rhizobium leguminosarum bv. trifolii (strain WSM2304).